The chain runs to 621 residues: 1-deoxy-D-xylulose-5-phosphate synthase (621 aa).

Residues His80 and 121–123 (GHS) each bind thiamine diphosphate. Residue Asp152 coordinates Mg(2+). Residues 153-154 (GA), Asn181, Tyr288, and Glu370 contribute to the thiamine diphosphate site. Asn181 contacts Mg(2+).

Belongs to the transketolase family. DXPS subfamily. In terms of assembly, homodimer. Mg(2+) is required as a cofactor. Thiamine diphosphate serves as cofactor.

It carries out the reaction D-glyceraldehyde 3-phosphate + pyruvate + H(+) = 1-deoxy-D-xylulose 5-phosphate + CO2. It functions in the pathway metabolic intermediate biosynthesis; 1-deoxy-D-xylulose 5-phosphate biosynthesis; 1-deoxy-D-xylulose 5-phosphate from D-glyceraldehyde 3-phosphate and pyruvate: step 1/1. Catalyzes the acyloin condensation reaction between C atoms 2 and 3 of pyruvate and glyceraldehyde 3-phosphate to yield 1-deoxy-D-xylulose-5-phosphate (DXP). This chain is 1-deoxy-D-xylulose-5-phosphate synthase, found in Vibrio campbellii (strain ATCC BAA-1116).